The sequence spans 349 residues: Ion-translocating oxidoreductase complex subunit D (349 aa).

The next 3 membrane-spanning stretches (helical) occupy residues 36–56, 77–99, and 124–144; these read CAFF…VALS, SAML…WMIV, and AMAA…TWIA. T185 is subject to FMN phosphoryl threonine. 5 consecutive transmembrane segments (helical) span residues 212–232, 239–259, 265–285, 291–311, and 315–335; these read STGV…IVLL, WHIS…GFLL, ASPL…FIAT, ATSP…VYII, and GGYP…APFI.

The protein belongs to the NqrB/RnfD family. The complex is composed of six subunits: RnfA, RnfB, RnfC, RnfD, RnfE and RnfG. Requires FMN as cofactor.

It localises to the cell inner membrane. Functionally, part of a membrane-bound complex that couples electron transfer with translocation of ions across the membrane. This is Ion-translocating oxidoreductase complex subunit D from Shewanella oneidensis (strain ATCC 700550 / JCM 31522 / CIP 106686 / LMG 19005 / NCIMB 14063 / MR-1).